We begin with the raw amino-acid sequence, 376 residues long: Chaperone protein DnaJ (376 aa).

Residues 5 to 70 form the J domain; sequence DYYEVLGVAR…NKRRAYDAHG (66 aa). Residues 132 to 209 form a CR-type zinc finger; that stretch reads GIERRIEIPT…CHGAGRVEEN (78 aa). Positions 145, 148, 161, 164, 183, 186, 197, and 200 each coordinate Zn(2+). CXXCXGXG motif repeat units lie at residues 145-152, 161-168, 183-190, and 197-204; these read CVSCHGSG, CGTCHGRG, CPHCDGRG, and CKTCHGAG.

This sequence belongs to the DnaJ family. Homodimer. Zn(2+) serves as cofactor.

It is found in the cytoplasm. Participates actively in the response to hyperosmotic and heat shock by preventing the aggregation of stress-denatured proteins and by disaggregating proteins, also in an autonomous, DnaK-independent fashion. Unfolded proteins bind initially to DnaJ; upon interaction with the DnaJ-bound protein, DnaK hydrolyzes its bound ATP, resulting in the formation of a stable complex. GrpE releases ADP from DnaK; ATP binding to DnaK triggers the release of the substrate protein, thus completing the reaction cycle. Several rounds of ATP-dependent interactions between DnaJ, DnaK and GrpE are required for fully efficient folding. Also involved, together with DnaK and GrpE, in the DNA replication of plasmids through activation of initiation proteins. In Xanthomonas oryzae pv. oryzae (strain PXO99A), this protein is Chaperone protein DnaJ.